A 152-amino-acid chain; its full sequence is Flagellar assembly factor FliW (152 aa).

This sequence belongs to the FliW family. In terms of assembly, interacts with translational regulator CsrA and flagellin(s).

The protein resides in the cytoplasm. Acts as an anti-CsrA protein, binds CsrA and prevents it from repressing translation of its target genes, one of which is flagellin. Binds to flagellin and participates in the assembly of the flagellum. The protein is Flagellar assembly factor FliW of Caldicellulosiruptor saccharolyticus (strain ATCC 43494 / DSM 8903 / Tp8T 6331).